Consider the following 88-residue polypeptide: DNA-directed RNA polymerase subunit omega (88 aa).

It belongs to the RNA polymerase subunit omega family. As to quaternary structure, the RNAP catalytic core consists of 2 alpha, 1 beta, 1 beta' and 1 omega subunit. When a sigma factor is associated with the core the holoenzyme is formed, which can initiate transcription.

The catalysed reaction is RNA(n) + a ribonucleoside 5'-triphosphate = RNA(n+1) + diphosphate. Functionally, promotes RNA polymerase assembly. Latches the N- and C-terminal regions of the beta' subunit thereby facilitating its interaction with the beta and alpha subunits. This Kineococcus radiotolerans (strain ATCC BAA-149 / DSM 14245 / SRS30216) protein is DNA-directed RNA polymerase subunit omega.